We begin with the raw amino-acid sequence, 368 residues long: Type 2 DNA topoisomerase 6 subunit A (368 aa).

One can recognise a Topo IIA-type catalytic domain in the interval 9 to 148 (TEDEIARERL…FHMRPEESGA (140 aa)). The active-site O-(5'-phospho-DNA)-tyrosine intermediate is the tyrosine 103. The Mg(2+) site is built by glutamate 201 and aspartate 253.

This sequence belongs to the TOP6A family. Homodimer. Heterotetramer of two Top6A and two Top6B chains. Mg(2+) serves as cofactor.

The enzyme catalyses ATP-dependent breakage, passage and rejoining of double-stranded DNA.. Relaxes both positive and negative superturns and exhibits a strong decatenase activity. The chain is Type 2 DNA topoisomerase 6 subunit A from Natronomonas pharaonis (strain ATCC 35678 / DSM 2160 / CIP 103997 / JCM 8858 / NBRC 14720 / NCIMB 2260 / Gabara) (Halobacterium pharaonis).